A 424-amino-acid polypeptide reads, in one-letter code: uncharacterized protein (424 aa).

Lysine 259 is modified (N6-(pyridoxal phosphate)lysine).

Belongs to the class-III pyridoxal-phosphate-dependent aminotransferase family. Requires pyridoxal 5'-phosphate as cofactor.

This is an uncharacterized protein from Archaeoglobus fulgidus (strain ATCC 49558 / DSM 4304 / JCM 9628 / NBRC 100126 / VC-16).